Reading from the N-terminus, the 179-residue chain is Cytochrome c-type biogenesis protein CcmE (179 aa).

Residues 1-8 (MNPRRKSR) are Cytoplasmic-facing. Residues 9–29 (LTIILFVLLGVTIASSLVLYA) form a helical; Signal-anchor for type II membrane protein membrane-spanning segment. The Periplasmic portion of the chain corresponds to 30–179 (LRQNIDLFYT…AVNSVEEGKK (150 aa)). 2 residues coordinate heme: His131 and Tyr135. 2 stretches are compositionally biased toward basic and acidic residues: residues 138 to 148 (PDLSEKMEQVH) and 161 to 179 (ESDR…EGKK). Residues 138-179 (PDLSEKMEQVHKPMGISNQDMQGESDRDRLDKAVNSVEEGKK) are disordered.

It belongs to the CcmE/CycJ family.

The protein resides in the cell inner membrane. Functionally, heme chaperone required for the biogenesis of c-type cytochromes. Transiently binds heme delivered by CcmC and transfers the heme to apo-cytochromes in a process facilitated by CcmF and CcmH. This chain is Cytochrome c-type biogenesis protein CcmE, found in Mannheimia succiniciproducens (strain KCTC 0769BP / MBEL55E).